The chain runs to 724 residues: Ribosomal RNA processing protein 1 homolog B (724 aa).

The tract at residues 331 to 576 (NGAPLSSAED…SKKKKKTMKL (246 aa)) is disordered. Phosphoserine occurs at positions 336 and 370. The segment covering 373-386 (HIHKKKRKKRKRSH) has biased composition (basic residues). Residues serine 432 and serine 438 each carry the phosphoserine modification. The segment covering 448-461 (HNKRKRPRKKKLRA) has biased composition (basic residues). The span at 483 to 496 (SGHSQSSAAHISSS) shows a compositional bias: low complexity. Position 494 is a phosphoserine (serine 494). 2 stretches are compositionally biased toward polar residues: residues 513–528 (DSSSDLPVQKSGTPTS) and 548–564 (KTASSTLDPCDPSSQKP). Residue lysine 618 is modified to N6-acetyllysine. Positions 625–649 (AKNSSATRPQGPAGQLNKTPSSSKK) are disordered. Positions 640–649 (LNKTPSSSKK) are enriched in polar residues. Residues serine 668 and serine 672 each carry the phosphoserine modification. Arginine 678 carries the citrulline modification. The interval 687–724 (PLHGVLKTATSSPASTPLSPMRLPATTPKRRPRAADFF) is disordered. Threonine 694 bears the Phosphothreonine mark. The segment covering 694-706 (TATSSPASTPLSP) has biased composition (low complexity). Phosphoserine occurs at positions 698 and 701.

Belongs to the RRP1 family. Interacts with the transcriptional activator E2F1. Interacts with serine/threonine-protein phosphatase PP1 subunits PPP1CB and PPP1CC but not with PPP1CA. Interacts with 60S ribosomal proteins RPL5 and RPL27, ribosomal processing protein RRP1/NNP1 and other nucleolar proteins including NOP2/NOL1 and FBL. Also interacts with nucleolar protein NPM1/B23. Interacts with splicing factor SRSF1 and LUC7L3/CROP. Interacts with GTPase activator SIPA1. Interacts with H1-10, NCL, PARP1, TRIM28 and YBX3. In terms of processing, citrullinated by PADI4.

The protein localises to the nucleus. It is found in the nucleolus. It localises to the nucleoplasm. The protein resides in the chromosome. Functionally, positively regulates DNA damage-induced apoptosis by acting as a transcriptional coactivator of proapoptotic target genes of the transcriptional activator E2F1. Likely to play a role in ribosome biogenesis by targeting serine/threonine protein phosphatase PP1 to the nucleolus. Involved in regulation of mRNA splicing. Inhibits SIPA1 GTPase activity. Involved in regulating expression of extracellular matrix genes. Associates with chromatin and may play a role in modulating chromatin structure. This chain is Ribosomal RNA processing protein 1 homolog B (Rrp1b), found in Mus musculus (Mouse).